Here is a 710-residue protein sequence, read N- to C-terminus: Dihydroxyacetone synthase (710 aa).

Thiamine diphosphate contacts are provided by residues histidine 78 and 128 to 130; that span reads GPL. Mg(2+)-binding residues include aspartate 169, asparagine 199, and valine 201. Asparagine 199 is a thiamine diphosphate binding site. Thiamine diphosphate-binding residues include histidine 275, glutamate 433, and phenylalanine 461. The Proton donor role is filled by glutamate 433. The Microbody targeting signal signature appears at 708 to 710; the sequence is NKL.

It belongs to the transketolase family. It depends on Mg(2+) as a cofactor. Ca(2+) is required as a cofactor. The cofactor is Mn(2+). Requires Co(2+) as cofactor. Thiamine diphosphate serves as cofactor.

The protein localises to the peroxisome. It catalyses the reaction D-xylulose 5-phosphate + formaldehyde = dihydroxyacetone + D-glyceraldehyde 3-phosphate. Its function is as follows. This is the major methanol assimilatory enzyme from the methylotrophic Hansenula polymorpha. This chain is Dihydroxyacetone synthase (DAS), found in Pichia angusta (Yeast).